Consider the following 185-residue polypeptide: Ribosome-recycling factor (185 aa).

The protein belongs to the RRF family.

It is found in the cytoplasm. In terms of biological role, responsible for the release of ribosomes from messenger RNA at the termination of protein biosynthesis. May increase the efficiency of translation by recycling ribosomes from one round of translation to another. The protein is Ribosome-recycling factor of Kocuria rhizophila (strain ATCC 9341 / DSM 348 / NBRC 103217 / DC2201).